A 179-amino-acid chain; its full sequence is Large ribosomal subunit protein uL5 (179 aa).

Belongs to the universal ribosomal protein uL5 family. As to quaternary structure, part of the 50S ribosomal subunit; part of the 5S rRNA/L5/L18/L25 subcomplex. Contacts the 5S rRNA and the P site tRNA. Forms a bridge to the 30S subunit in the 70S ribosome.

Functionally, this is one of the proteins that bind and probably mediate the attachment of the 5S RNA into the large ribosomal subunit, where it forms part of the central protuberance. In the 70S ribosome it contacts protein S13 of the 30S subunit (bridge B1b), connecting the 2 subunits; this bridge is implicated in subunit movement. Contacts the P site tRNA; the 5S rRNA and some of its associated proteins might help stabilize positioning of ribosome-bound tRNAs. The chain is Large ribosomal subunit protein uL5 from Prochlorococcus marinus (strain MIT 9211).